Consider the following 479-residue polypeptide: MLLPILLHFLLLITQLNGSPAEVRLINDLMSGYVREERPTLDSSKPVVVSLGVFLQQIINLSEKEEQLEVNAWLKFQWRDENLRWEPTAYENVTDLRHPPDALWTPDILLYNSVDSEFDSSYKVNLVNYHTGNINWMPPGIFKVSCKLDIYWFPFDEQVCYFKFGSWTYTRDKIQLEKGDFDFSEFIPNGEWIIIDYRTNITVKQYECCPEQYEDITFTLHLRRRTLYYSFNLIAPVLLTMILVILGFTVSPETCEKVGLQISVSLAICIFLTIMSELTPQTSEAVPLLGVFFHTCNFISVLATSFTVYVQSFHFRNQHVHERMDFWMRFILLEWSPWLLRMKMPDRENNFQTLTESWKGRNRRESMARTAFEYADGPVTQIHSMGIMLKDNFEELIYQVKQEKIADEKGIERLRVLQKIYDHVKMIREHDDDNDEDSRVALEWRFAAIVVDRLCLLAFSLLIVVVSIIIALRAPYLFA.

An N-terminal signal peptide occupies residues 1 to 18; the sequence is MLLPILLHFLLLITQLNG. Residues 19–230 lie on the Extracellular side of the membrane; the sequence is SPAEVRLIND…HLRRRTLYYS (212 aa). N-linked (GlcNAc...) asparagine glycosylation is found at N60 and N92. C146 and C160 are oxidised to a cystine. A glycan (N-linked (GlcNAc...) asparagine) is linked at N200. An intrachain disulfide couples C208 to C209. Residues 231–251 form a helical membrane-spanning segment; sequence FNLIAPVLLTMILVILGFTVS. The Cytoplasmic portion of the chain corresponds to 252–257; it reads PETCEK. A helical membrane pass occupies residues 258 to 278; it reads VGLQISVSLAICIFLTIMSEL. Residues 279 to 285 are Extracellular-facing; the sequence is TPQTSEA. Residues 286 to 306 form a helical membrane-spanning segment; it reads VPLLGVFFHTCNFISVLATSF. Residues 307-453 lie on the Cytoplasmic side of the membrane; it reads TVYVQSFHFR…WRFAAIVVDR (147 aa). A helical membrane pass occupies residues 454-474; it reads LCLLAFSLLIVVVSIIIALRA. Over 475 to 479 the chain is Extracellular; that stretch reads PYLFA.

This sequence belongs to the ligand-gated ion channel (TC 1.A.9) family. Acetylcholine receptor (TC 1.A.9.1) subfamily. As to expression, expressed in interneurons, motor neurons, pharyngeal neurons and muscles.

The protein localises to the cell membrane. Its subcellular location is the postsynaptic cell membrane. After binding acetylcholine, the AChR responds by an extensive change in conformation that affects all subunits and leads to opening of an ion-conducting channel across the plasma membrane. Activity is required in glutamatergic neurons to mediate nicotine-induced and nicotine-motivated behaviors. This is Acetylcholine receptor subunit alpha-type acr-15 from Caenorhabditis elegans.